Consider the following 180-residue polypeptide: Adenine phosphoribosyltransferase (180 aa).

It belongs to the purine/pyrimidine phosphoribosyltransferase family. Homodimer.

The protein resides in the cytoplasm. It carries out the reaction AMP + diphosphate = 5-phospho-alpha-D-ribose 1-diphosphate + adenine. The protein operates within purine metabolism; AMP biosynthesis via salvage pathway; AMP from adenine: step 1/1. Functionally, catalyzes a salvage reaction resulting in the formation of AMP, that is energically less costly than de novo synthesis. This Mycobacterium avium (strain 104) protein is Adenine phosphoribosyltransferase.